Here is a 602-residue protein sequence, read N- to C-terminus: Transcription termination factor Rho (602 aa).

2 disordered regions span residues 1–35 and 76–216; these read MTDT…EPAG and ANGA…AEAE. The segment covering 85–96 has biased composition (basic and acidic residues); that stretch reads SAQEHDKGDRPP. The segment covering 100–120 has biased composition (polar residues); that stretch reads APATQGEQTPTEQIDSQSQQV. Residues 172–182 are compositionally biased toward low complexity; that stretch reads GDQQASGGQQA. The segment covering 183 to 192 has biased composition (basic and acidic residues); that stretch reads RGDEDGEARQ. Basic residues predominate over residues 193–206; it reads GRRGRRFRDRRRRG. A Rho RNA-BD domain is found at 223-301; it reads VQPVAGILDV…VRLDSINGGS (79 aa). Residues 344-349, 356-361, and arginine 387 each bind ATP; these read GKGQRA and KAGKTT.

Belongs to the Rho family. Homohexamer. The homohexamer assembles into an open ring structure.

In terms of biological role, facilitates transcription termination by a mechanism that involves Rho binding to the nascent RNA, activation of Rho's RNA-dependent ATPase activity, and release of the mRNA from the DNA template. The chain is Transcription termination factor Rho from Mycobacterium bovis (strain ATCC BAA-935 / AF2122/97).